A 459-amino-acid polypeptide reads, in one-letter code: Ribulose bisphosphate carboxylase large chain (459 aa).

N6,N6,N6-trimethyllysine is present on lysine 4. Substrate-binding residues include asparagine 113 and threonine 163. Lysine 165 acts as the Proton acceptor in catalysis. Substrate is bound at residue lysine 167. Mg(2+) is bound by residues lysine 191, aspartate 193, and glutamate 194. At lysine 191 the chain carries N6-carboxylysine. Histidine 284 serves as the catalytic Proton acceptor. Positions 285, 317, and 369 each coordinate substrate.

It belongs to the RuBisCO large chain family. Type I subfamily. As to quaternary structure, heterohexadecamer of 8 large chains and 8 small chains; disulfide-linked. The disulfide link is formed within the large subunit homodimers. The cofactor is Mg(2+). Post-translationally, the disulfide bond which can form in the large chain dimeric partners within the hexadecamer appears to be associated with oxidative stress and protein turnover.

It localises to the plastid. The protein resides in the chloroplast. It carries out the reaction 2 (2R)-3-phosphoglycerate + 2 H(+) = D-ribulose 1,5-bisphosphate + CO2 + H2O. The enzyme catalyses D-ribulose 1,5-bisphosphate + O2 = 2-phosphoglycolate + (2R)-3-phosphoglycerate + 2 H(+). In terms of biological role, ruBisCO catalyzes two reactions: the carboxylation of D-ribulose 1,5-bisphosphate, the primary event in carbon dioxide fixation, as well as the oxidative fragmentation of the pentose substrate in the photorespiration process. Both reactions occur simultaneously and in competition at the same active site. This Morus alba (White mulberry) protein is Ribulose bisphosphate carboxylase large chain.